The sequence spans 257 residues: MKDVQNERDYRGIYLRKVGIKNIHWPIKIITKSGEYQSTVANIDISVDLREDLRGTHMSRFVEVLNGIDFLHPENLGKILQEVREKLKADSSHIKITFPYFIFKKTPVSQIASPNMIECVIEAELSKKLYMIIGVKVPIHTLCPCSKEISEYGAHNQRAIAEIYIKSKKLIWFEDLVEIAERSASAPIYSLLKRPDEKYITETAYNNPKFVEDVVRDIVSELEKEPKISWYRVEVTSFESIHNHNAFACVEKGWIKK.

The protein belongs to the GTP cyclohydrolase IV family.

It carries out the reaction GTP + H2O = 7,8-dihydroneopterin 3'-triphosphate + formate + H(+). It functions in the pathway cofactor biosynthesis; 7,8-dihydroneopterin triphosphate biosynthesis; 7,8-dihydroneopterin triphosphate from GTP: step 1/1. Its function is as follows. Converts GTP to 7,8-dihydroneopterin triphosphate. The protein is GTP cyclohydrolase FolE2 of Dictyoglomus turgidum (strain DSM 6724 / Z-1310).